The primary structure comprises 59 residues: MAKLQITLTRSVIGRPETQRKTVEALGLKKTNSSVVVEDNPAIRGQINKVKHLVTVEEK.

Belongs to the universal ribosomal protein uL30 family. As to quaternary structure, part of the 50S ribosomal subunit.

The chain is Large ribosomal subunit protein uL30 from Staphylococcus aureus (strain JH1).